Here is a 319-residue protein sequence, read N- to C-terminus: Putative antiporter CaxA (319 aa).

10 helical membrane passes run 3–23, 38–58, 81–101, 105–125, 127–147, 175–195, 208–228, 250–270, 275–292, and 297–317; these read VATI…DRFV, MIIG…MVSA, ILLV…SMTI, FPLL…QSLT, AEGA…VYWG, VWLV…VHGA, LIGL…ASLI, ILAV…AAAA, YVMM…LRLG, and INRV…YLLF.

Belongs to the Ca(2+):cation antiporter (CaCA) (TC 2.A.19) family.

The protein resides in the cell membrane. Functionally, confers modest Ca(2+) and Na(+) resistance. This Alkalimonas amylolytica protein is Putative antiporter CaxA (caxA).